Reading from the N-terminus, the 472-residue chain is tRNA-2-methylthio-N(6)-dimethylallyladenosine synthase (472 aa).

Residues 1–24 are disordered; the sequence is MTGTPDVFPPATPGGAPLVALPAG. The region spanning 33–150 is the MTTase N-terminal domain; the sequence is GKLYIKTHGC…LPELIRARRE (118 aa). Positions 42, 79, 113, 187, 191, and 194 each coordinate [4Fe-4S] cluster. Residues 173–407 form the Radical SAM core domain; sequence RAEGASAFVS…RINAHAAGIS (235 aa). The TRAM domain maps to 408–471; it reads EKMVGTVQTV…TNSLRARVVA (64 aa).

It belongs to the methylthiotransferase family. MiaB subfamily. As to quaternary structure, monomer. Requires [4Fe-4S] cluster as cofactor.

The protein resides in the cytoplasm. The catalysed reaction is N(6)-dimethylallyladenosine(37) in tRNA + (sulfur carrier)-SH + AH2 + 2 S-adenosyl-L-methionine = 2-methylsulfanyl-N(6)-dimethylallyladenosine(37) in tRNA + (sulfur carrier)-H + 5'-deoxyadenosine + L-methionine + A + S-adenosyl-L-homocysteine + 2 H(+). In terms of biological role, catalyzes the methylthiolation of N6-(dimethylallyl)adenosine (i(6)A), leading to the formation of 2-methylthio-N6-(dimethylallyl)adenosine (ms(2)i(6)A) at position 37 in tRNAs that read codons beginning with uridine. This Stenotrophomonas maltophilia (strain K279a) protein is tRNA-2-methylthio-N(6)-dimethylallyladenosine synthase.